Here is a 606-residue protein sequence, read N- to C-terminus: Glutamine--fructose-6-phosphate aminotransferase [isomerizing] (606 aa).

Cysteine 2 (nucleophile; for GATase activity) is an active-site residue. The region spanning cysteine 2–glycine 218 is the Glutamine amidotransferase type-2 domain. SIS domains follow at residues phenylalanine 278 to glutamate 424 and tryptophan 455 to proline 596. The For Fru-6P isomerization activity role is filled by lysine 601.

As to quaternary structure, homodimer.

It localises to the cytoplasm. It carries out the reaction D-fructose 6-phosphate + L-glutamine = D-glucosamine 6-phosphate + L-glutamate. Catalyzes the first step in hexosamine metabolism, converting fructose-6P into glucosamine-6P using glutamine as a nitrogen source. In Chlamydia muridarum (strain MoPn / Nigg), this protein is Glutamine--fructose-6-phosphate aminotransferase [isomerizing].